A 165-amino-acid chain; its full sequence is MMSGPRLTHIDSAGEAHMVDVGDKAETERVAAAEGFVRMRPETLALILEGNAKKGDVIGTARLAGIMAAKQTSNLIPLCHPLMLTKVSVDIVPDDALPGLRIEAMAKLKGRTGVEMEALTAVSIACLTIYDMAKAADREMEIGGIRLVSKSGGKSGDYRRGGDQD.

Residues 78-80 (LCH) and 116-117 (ME) each bind substrate. D131 is a catalytic residue.

This sequence belongs to the MoaC family. As to quaternary structure, homohexamer; trimer of dimers.

It catalyses the reaction (8S)-3',8-cyclo-7,8-dihydroguanosine 5'-triphosphate = cyclic pyranopterin phosphate + diphosphate. It participates in cofactor biosynthesis; molybdopterin biosynthesis. Its function is as follows. Catalyzes the conversion of (8S)-3',8-cyclo-7,8-dihydroguanosine 5'-triphosphate to cyclic pyranopterin monophosphate (cPMP). The chain is Cyclic pyranopterin monophosphate synthase from Sinorhizobium fredii (strain NBRC 101917 / NGR234).